The sequence spans 1808 residues: MGLPSQVLACAILGLLYQHASGGLIKRIIRQKRETGLNVTLPEDNQPVVFNHVYNIKLPVGSLCSVDLDTASGDADLKAEIEPVKNYEEHTVNEGNQIVFTHRINIPRRACGCAAAPDIKDLLSRLEELEGLVSSLREQCASGAGCCPNSQTAEGRLDTAPYCSGHGNYSTEICGCVCEPGWKGPNCSEPACPRNCLNRGLCVRGKCICEEGFTGEDCSQAACPSDCNDQGKCVDGVCVCFEGYTGPDCGEELCPHGCGIHGRCVGGRCVCHEGFTGEDCNEPLCPNNCHNRGRCVDNECVCDEGYTGEDCGELICPNDCFDRGRCINGTCFCEEGYTGEDCGELTCPNNCNGNGRCENGLCVCHEGFVGDDCSQKRCPKDCNNRGHCVDGRCVCHEGYLGEDCGELRCPNDCHNRGRCINGQCVCDEGFIGEDCGELRCPNDCHNRGRCVNGQCECHEGFIGEDCGELRCPNDCNSHGRCVNGQCVCDEGYTGEDCGELRCPNDCHNRGRCVEGRCVCDNGFMGEDCGELSCPNDCHQHGRCVDGRCVCHEGFTGEDCRERSCPNDCNNVGRCVEGRCVCEEGYMGIDCSDVSPPTELTVTNVTDKTVNLEWKHENLVNEYLVTYVPTSSGGLDLQFTVPGNQTSATIHELEPGVEYFIRVFAILKNKKSIPVSARVATYLPAPEGLKFKSVRETSVQVEWDPLSISFDGWELVFRNMQKKDDNGDITSSLKRPETSYMQPGLAPGQQYNVSLHIVKNNTRGPGLSRVITTKLDAPSQIEAKDVTDTTALITWSKPLAEIEGIELTYGPKDVPGDRTTIDLSEDENQYSIGNLRPHTEYEVTLISRRGDMESDPAKEVFVTDLDAPRNLKRVSQTDNSITLEWKNSHANIDNYRIKFAPISGGDHTELTVPKGNQATTRATLTGLRPGTEYGIGVTAVRQDRESAPATINAGTDLDNPKDLEVSDPTETTLSLRWRRPVAKFDRYRLTYVSPSGKKNEMEIPVDSTSFILRGLDAGTEYTISLVAEKGRHKSKPTTIKGSTEEEPELGNLSVSETGWDGFQLTWTAADGAYENFVIQVQQSDNPEETWNITVPGGQHSVNVTGLKANTPYNVTLYGVIRGYRTKPLYVETTTGAHPEVGELTVSDITPESFNLSWTTTNGDFDAFTIEIIDSNRLLEPMEFNISGNSRTAHISGLSPSTDFIVYLYGISHGFRTQAISAAATTEAEPEVDNLLVSDATPDGFRLSWTADDGVFDSFVLKIRDTKRKSDPLELIVPGHERTHDITGLKEGTEYEIELYGVSSGRRSQPINSVATTVVGSPKGISFSDITENSATVSWTPPRSRVDSYRVSYVPITGGTPNVVTVDGSKTRTKLVKLVPGVDYNVNIISVKGFEESEPISGILKTALDSPSGLVVMNITDSEALATWQPAIAAVDNYIVSYSSEDEPEVTQMVSGNTVEYDLNGLRPATEYTLRVHAVKDAQKSETLSTQFTTGLDAPKDLSATEVQSETAVITWRPPRAPVTDYLLTYESIDGRVKEVILDPETTSYTLTELSPSTQYTVKLQALSRSMRSKMIQTVFTTTGLLYPYPKDCSQALLNGEVTSGLYTIYLNGDRTQPLQVFCDMAEDGGGWIVFLRRQNGKEDFYRNWKNYVAGFGDPKDEFWIGLENLHKISSQGQYELRVDLRDRGETAYAVYDKFSVGDAKTRYRLRVDGYSGTAGDSMTYHNGRSFSTFDKDNDSAITNCALSYKGAFWYKNCHRVNLMGRYGDNNHSQGVNWFHWKGHEYSIQFAEMKLRPSSFRNLEGRRKRA.

An N-terminal signal peptide occupies residues 1 to 22 (MGLPSQVLACAILGLLYQHASG). The propeptide occupies 23 to 33 (GLIKRIIRQKR). Asn-38 carries an N-linked (GlcNAc...) asparagine glycan. Ser-72 carries O-linked (Xyl...) (chondroitin sulfate) serine glycosylation. Positions 118–142 (DIKDLLSRLEELEGLVSSLREQCAS) form a coiled coil. N-linked (GlcNAc...) asparagine glycans are attached at residues Asn-168 and Asn-186. Residues 176-188 (CVCEPGWKGPNCS) form the EGF-like 1; incomplete domain. 13 EGF-like domains span residues 188-219 (SEPACPRNCLNRGLCVRGKCICEEGFTGEDCS), 219-250 (SQAACPSDCNDQGKCVDGVCVCFEGYTGPDCG), 250-281 (GEELCPHGCGIHGRCVGGRCVCHEGFTGEDCN), 281-312 (NEPLCPNNCHNRGRCVDNECVCDEGYTGEDCG), 312-343 (GELICPNDCFDRGRCINGTCFCEEGYTGEDCG), 343-374 (GELTCPNNCNGNGRCENGLCVCHEGFVGDDCS), 374-405 (SQKRCPKDCNNRGHCVDGRCVCHEGYLGEDCG), 405-436 (GELRCPNDCHNRGRCINGQCVCDEGFIGEDCG), 436-467 (GELRCPNDCHNRGRCVNGQCECHEGFIGEDCG), 467-498 (GELRCPNDCNSHGRCVNGQCVCDEGYTGEDCG), 498-529 (GELRCPNDCHNRGRCVEGRCVCDNGFMGEDCG), 529-560 (GELSCPNDCHQHGRCVDGRCVCHEGFTGEDCR), and 560-591 (RERSCPNDCNNVGRCVEGRCVCEEGYMGIDCS). Disulfide bonds link Cys-192/Cys-202, Cys-196/Cys-207, Cys-209/Cys-218, Cys-223/Cys-233, Cys-227/Cys-238, Cys-240/Cys-249, Cys-254/Cys-264, Cys-258/Cys-269, Cys-271/Cys-280, Cys-285/Cys-295, Cys-289/Cys-300, Cys-302/Cys-311, Cys-316/Cys-326, Cys-320/Cys-331, Cys-333/Cys-342, Cys-347/Cys-357, Cys-351/Cys-362, Cys-364/Cys-373, Cys-378/Cys-388, Cys-382/Cys-393, Cys-395/Cys-404, Cys-409/Cys-419, Cys-413/Cys-424, Cys-426/Cys-435, Cys-440/Cys-450, Cys-444/Cys-455, Cys-457/Cys-466, Cys-471/Cys-481, Cys-475/Cys-486, Cys-488/Cys-497, Cys-502/Cys-512, Cys-506/Cys-517, Cys-519/Cys-528, Cys-533/Cys-543, Cys-537/Cys-548, Cys-550/Cys-559, Cys-564/Cys-574, Cys-568/Cys-579, and Cys-581/Cys-590. A glycan (N-linked (GlcNAc...) asparagine) is linked at Asn-328. Fibronectin type-III domains lie at 595 to 685 (PPTE…LPAP), 686 to 775 (EGLK…TKLD), 776 to 866 (APSQ…DLDA), 867 to 957 (PRNL…TDLD), 958 to 1046 (NPKD…EEEP), 1047 to 1138 (ELGN…AHPE), 1139 to 1228 (VGEL…EAEP), 1229 to 1318 (EVDN…TVVG), 1319 to 1408 (SPKG…ALDS), 1409 to 1495 (PSGL…TGLD), and 1496 to 1584 (APKD…TGLL). 4 N-linked (GlcNAc...) asparagine glycosylation sites follow: Asn-603, Asn-643, Asn-751, and Asn-759. Residues Asn-1050, Asn-1090, Asn-1101, Asn-1112, Asn-1153, and Asn-1183 are each glycosylated (N-linked (GlcNAc...) asparagine). N-linked (GlcNAc...) asparagine glycosylation is present at Asn-1416. Positions 1582–1797 (GLLYPYPKDC…FAEMKLRPSS (216 aa)) constitute a Fibrinogen C-terminal domain. Residues Asn-1736 and Asn-1769 are each glycosylated (N-linked (GlcNAc...) asparagine).

It belongs to the tenascin family. In terms of assembly, homohexamer; disulfide-linked. A homotrimer may be formed in the triple coiled-coil region and may be stabilized by disulfide rings at both ends. Two of such half-hexabrachions may be disulfide linked within the central globule. Interacts with CSPG5. As to expression, expressed in the brain.

It localises to the secreted. The protein localises to the extracellular space. The protein resides in the extracellular matrix. Its function is as follows. Extracellular matrix protein implicated in guidance of migrating neurons as well as axons during development, synaptic plasticity as well as neuronal regeneration. Ligand for integrins alpha-8/beta-1, alpha-9/beta-1, alpha-V/beta-3 and alpha-V/beta-6. This chain is Tenascin (TNC), found in Gallus gallus (Chicken).